The sequence spans 317 residues: Small ribosomal subunit protein uS2 (317 aa).

Residues Ser277–Gly317 form a disordered region. Residues Ala281–Ala302 are compositionally biased toward low complexity.

It belongs to the universal ribosomal protein uS2 family. Component of the small ribosomal subunit. Mature ribosomes consist of a small (40S) and a large (60S) subunit. The 40S subunit contains about 33 different proteins and 1 molecule of RNA (18S). The 60S subunit contains about 49 different proteins and 3 molecules of RNA (28S, 5.8S and 5S). Interacts with ribosomal protein S21.

The protein localises to the cytoplasm. In terms of biological role, required for the assembly and/or stability of the 40S ribosomal subunit. Required for the processing of the 20S rRNA-precursor to mature 18S rRNA in a late step of the maturation of 40S ribosomal subunits. This is Small ribosomal subunit protein uS2 from Urechis caupo (Innkeeper worm).